We begin with the raw amino-acid sequence, 285 residues long: Urease accessory protein UreD (285 aa).

The protein belongs to the UreD family. In terms of assembly, ureD, UreF and UreG form a complex that acts as a GTP-hydrolysis-dependent molecular chaperone, activating the urease apoprotein by helping to assemble the nickel containing metallocenter of UreC. The UreE protein probably delivers the nickel.

It is found in the cytoplasm. Its function is as follows. Required for maturation of urease via the functional incorporation of the urease nickel metallocenter. This chain is Urease accessory protein UreD, found in Cytophaga hutchinsonii (strain ATCC 33406 / DSM 1761 / CIP 103989 / NBRC 15051 / NCIMB 9469 / D465).